Consider the following 757-residue polypeptide: Probable serine/threonine-protein kinase pknA2 (757 aa).

Positions 14–274 constitute a Protein kinase domain; that stretch reads YRIVRNIAEG…DGAAAAEELS (261 aa). ATP contacts are provided by residues 20–28 and lysine 43; that span reads IAEGGMATV. The active-site Proton acceptor is the aspartate 140. A disordered region spans residues 344–387; sequence DTGGAADVNPPAPPVAPTTALDSSTPADASAPHKTQIMAQSGSE. 3 PASTA domains span residues 466 to 539, 545 to 614, and 615 to 681; these read DANA…VVSK, TIPK…TLSK, and GPMP…VISK.

The protein belongs to the protein kinase superfamily. Ser/Thr protein kinase family.

It carries out the reaction L-seryl-[protein] + ATP = O-phospho-L-seryl-[protein] + ADP + H(+). It catalyses the reaction L-threonyl-[protein] + ATP = O-phospho-L-threonyl-[protein] + ADP + H(+). The sequence is that of Probable serine/threonine-protein kinase pknA2 (pknA2) from Bifidobacterium longum (strain NCC 2705).